Reading from the N-terminus, the 577-residue chain is MNIQALLSEKVRQAMIAAGAPADCEPQVRQSAKVQFGDYQANGMMAVAKKLGMAPRQLAEQVLTHLDLNGIASKVEIAGPGFINIFLDPAFLAEHVQQALASDRLGVAMPEKQTIVVDYSAPNVAKEMHVGHLRSTIIGDAAVRTLEFLGHKVIRANHVGDWGTQFGMLIAWLEKQQQENAGEMELADLEGFYRDAKKHYDEDEEFAERARNYVVKLQSGDEYFREMWRKLVDITMTQNQITYDRLNVTLTRDDVMGESLYNPMLPGIVADLKAKGLAVESEGATVVFLDEFKNKEGEPMGVIIQKKDGGYLYTTTDIACAKYRYETLHADRVLYYIDSRQHQHLMQAWAIVRKAGYVPESVPLEHHMFGMMLGKDGKPFKTRAGGTVKLADLLDEALERARRLVAEKNPDMPADELEKLANAVGIGAVKYADLSKNRTTDYIFDWDNMLAFEGNTAPYMQYAYTRVLSVFRKAEINEEQLAAAPVIIREDREAQLAARLLQFEETLTVVAREGTPHVMCAYLYDLAGLFSGFYEHCPILSAENEEVRNSRLKLAQLTAKTLKLGLDTLGIETVERM.

The 'HIGH' region motif lies at 122–132 (PNVAKEMHVGH).

The protein belongs to the class-I aminoacyl-tRNA synthetase family. As to quaternary structure, monomer.

It localises to the cytoplasm. The enzyme catalyses tRNA(Arg) + L-arginine + ATP = L-arginyl-tRNA(Arg) + AMP + diphosphate. The protein is Arginine--tRNA ligase of Escherichia coli O6:K15:H31 (strain 536 / UPEC).